The chain runs to 367 residues: MSLADSVLAVNNDLPIRTDSPVHSGKVRSVYWLTDADSRRLIKTKGYNVPEDTPLAIMVISDRISAFDCIFHGEGGLKGIPGKGAALNAISNHWFKLFAENGLADSHILDIPHPFVWIVQKARPIKVEAICRQYITGSMWRAYSKGERVFCGITLPEGLEKDQKLPDLLITPSTKGILTGIPGVPAQDDVNISRSDIEANYQAFGFEKLEDIDLYEKLLKDGFKVISKALADIDQVFVDTKFEFGYVTDKDGNSKLIYMDEVGTPDSSRIWDGAAYRDGKILENSKEGFRQFLLNHFPDPDVLLNKDRMPEREALARDNDLPLEAMMQVSRTYTGVAEKVTGAAIPLPANPKADIIKILREEYDLIL.

Belongs to the SAICAR synthetase family.

It catalyses the reaction 5-amino-1-(5-phospho-D-ribosyl)imidazole-4-carboxylate + L-aspartate + ATP = (2S)-2-[5-amino-1-(5-phospho-beta-D-ribosyl)imidazole-4-carboxamido]succinate + ADP + phosphate + 2 H(+). Its pathway is purine metabolism; IMP biosynthesis via de novo pathway; 5-amino-1-(5-phospho-D-ribosyl)imidazole-4-carboxamide from 5-amino-1-(5-phospho-D-ribosyl)imidazole-4-carboxylate: step 1/2. The sequence is that of Phosphoribosylaminoimidazole-succinocarboxamide synthase from Shewanella putrefaciens (strain CN-32 / ATCC BAA-453).